Here is a 1082-residue protein sequence, read N- to C-terminus: Mediator of RNA polymerase II transcription subunit 14 (1082 aa).

2 disordered regions span residues 1–80 and 319–343; these read MTTT…APPP and EATS…NLPL. Thr2 is modified (N-acetylthreonine). Ser7 is modified (phosphoserine). Over residues 13–28 the composition is skewed to basic and acidic residues; the sequence is NEERLSNEMHALKNRS. Over residues 29 to 59 the composition is skewed to polar residues; it reads EQNGQEQQGPVKNTQLHGPSATDPETTATQK. A compositionally biased stretch (low complexity) spans 321–340; the sequence is TSTNGDSENNEENSSSNGNN. Phosphothreonine is present on Thr1036.

The protein belongs to the Mediator complex subunit 14 family. As to quaternary structure, component of the Mediator complex, which is composed of at least 21 subunits that form three structurally distinct submodules. The Mediator head module contains MED6, MED8, MED11, SRB4/MED17, SRB5/MED18, ROX3/MED19, SRB2/MED20 and SRB6/MED22, the middle module contains MED1, MED4, NUT1/MED5, MED7, CSE2/MED9, NUT2/MED10, SRB7/MED21 and SOH1/MED31, and the tail module contains MED2, PGD1/MED3, RGR1/MED14, GAL11/MED15 and SIN4/MED16. The head and the middle modules interact directly with RNA polymerase II, whereas the elongated tail module interacts with gene-specific regulatory proteins.

It is found in the nucleus. Functionally, component of the Mediator complex, a coactivator involved in the regulated transcription of nearly all RNA polymerase II-dependent genes. Mediator functions as a bridge to convey information from gene-specific regulatory proteins to the basal RNA polymerase II transcription machinery. The Mediator complex, having a compact conformation in its free form, is recruited to promoters by direct interactions with regulatory proteins and serves for the assembly of a functional preinitiation complex with RNA polymerase II and the general transcription factors. The Mediator complex unfolds to an extended conformation and partially surrounds RNA polymerase II, specifically interacting with the unphosphorylated form of the C-terminal domain (CTD) of RNA polymerase II. The Mediator complex dissociates from the RNA polymerase II holoenzyme and stays at the promoter when transcriptional elongation begins. This is Mediator of RNA polymerase II transcription subunit 14 (RGR1) from Saccharomyces cerevisiae (strain ATCC 204508 / S288c) (Baker's yeast).